The chain runs to 127 residues: Fluoride-specific ion channel FluC (127 aa).

4 helical membrane-spanning segments follow: residues 3–23 (ALLL…LLGV), 36–56 (GTFA…GGLA), 72–92 (VGAL…ALMI), and 101–121 (FAYS…GLLL). Na(+) contacts are provided by Gly76 and Thr79.

Belongs to the fluoride channel Fluc/FEX (TC 1.A.43) family.

Its subcellular location is the cell inner membrane. It catalyses the reaction fluoride(in) = fluoride(out). With respect to regulation, na(+) is not transported, but it plays an essential structural role and its presence is essential for fluoride channel function. Functionally, fluoride-specific ion channel. Important for reducing fluoride concentration in the cell, thus reducing its toxicity. The chain is Fluoride-specific ion channel FluC from Phenylobacterium zucineum (strain HLK1).